The primary structure comprises 321 residues: Acetyl-coenzyme A carboxylase carboxyl transferase subunit alpha (321 aa).

A CoA carboxyltransferase C-terminal domain is found at 39 to 293 (RLQQKSQTLA…RRALGDSLRQ (255 aa)).

This sequence belongs to the AccA family. In terms of assembly, acetyl-CoA carboxylase is a heterohexamer composed of biotin carboxyl carrier protein (AccB), biotin carboxylase (AccC) and two subunits each of ACCase subunit alpha (AccA) and ACCase subunit beta (AccD).

The protein resides in the cytoplasm. It catalyses the reaction N(6)-carboxybiotinyl-L-lysyl-[protein] + acetyl-CoA = N(6)-biotinyl-L-lysyl-[protein] + malonyl-CoA. It functions in the pathway lipid metabolism; malonyl-CoA biosynthesis; malonyl-CoA from acetyl-CoA: step 1/1. In terms of biological role, component of the acetyl coenzyme A carboxylase (ACC) complex. First, biotin carboxylase catalyzes the carboxylation of biotin on its carrier protein (BCCP) and then the CO(2) group is transferred by the carboxyltransferase to acetyl-CoA to form malonyl-CoA. This is Acetyl-coenzyme A carboxylase carboxyl transferase subunit alpha from Bordetella avium (strain 197N).